Consider the following 267-residue polypeptide: MRSSWTPLGPPVSQDRIITSFPKWYTPDACLQLKEHFHSRVSTACQHRNTGTAGLRLSKVVVVGDLYVGKTSLIHRLCKNVFDHDYKATIGVDFEIERFEIAGIPYSLQIWDTAGQEKFKCIASAYYRGAQVIITAFDLTDVQTLEHTRQWLEDVLRENEAGSCFIFLVGTKKDLLSGAACEQAEAEAVHLANEMQAEYWSVSAKTGENVKAFFSRVAALAFEQSVLQDLEKRPSTQSQVGDGDGDLIRIEVPKTQENKRPPGLGCC.

8 residues coordinate GTP: Val68, Gly69, Lys70, Thr71, Ser72, Asp83, Tyr86, and Thr89. A Mg(2+)-binding site is contributed by Thr71. Residues 76-94 (RLCKNVFDHDYKATIGVDF) carry the Switch 1 motif. Positions 89 and 112 each coordinate Mg(2+). Residues 113-132 (TAGQEKFKCIASAYYRGAQV) carry the Switch 2 motif. GTP is bound by residues Gly115, Lys172, Asp174, Ser203, Ala204, and Lys205. Residues Cys266 and Cys267 are each lipidated (S-geranylgeranyl cysteine).

This sequence belongs to the small GTPase superfamily. Rab family. Mg(2+) is required as a cofactor.

The protein localises to the golgi apparatus membrane. The enzyme catalyses GTP + H2O = GDP + phosphate + H(+). Regulated by guanine nucleotide exchange factors (GEFs) which promote the exchange of bound GDP for free GTP. Regulated by GTPase activating proteins (GAPs) which increase the GTP hydrolysis activity. Inhibited by GDP dissociation inhibitors (GDIs). Functionally, the small GTPases Rab are key regulators of intracellular membrane trafficking, from the formation of transport vesicles to their fusion with membranes. Rabs cycle between an inactive GDP-bound form and an active GTP-bound form that is able to recruit to membranes different sets of downstream effectors directly responsible for vesicle formation, movement, tethering and fusion. This is Ras-related protein Rab-36 from Mus musculus (Mouse).